The chain runs to 194 residues: Large ribosomal subunit protein eL15 (194 aa).

The interval 160 to 194 is disordered; that stretch reads RGLTSAGKKGRGLMYKGKGAEKVRPSVRANSKKAK.

It belongs to the eukaryotic ribosomal protein eL15 family.

The protein is Large ribosomal subunit protein eL15 of Methanococcus maripaludis (strain C6 / ATCC BAA-1332).